The chain runs to 193 residues: Xanthine phosphoribosyltransferase (193 aa).

2 residues coordinate xanthine: Leu-20 and Asn-27. 127 to 131 (AYGNA) lines the 5-phospho-alpha-D-ribose 1-diphosphate pocket. Residue Lys-155 coordinates xanthine.

Belongs to the purine/pyrimidine phosphoribosyltransferase family. Xpt subfamily. Homodimer.

Its subcellular location is the cytoplasm. It carries out the reaction XMP + diphosphate = xanthine + 5-phospho-alpha-D-ribose 1-diphosphate. It participates in purine metabolism; XMP biosynthesis via salvage pathway; XMP from xanthine: step 1/1. Functionally, converts the preformed base xanthine, a product of nucleic acid breakdown, to xanthosine 5'-monophosphate (XMP), so it can be reused for RNA or DNA synthesis. The chain is Xanthine phosphoribosyltransferase from Porphyromonas gingivalis (strain ATCC BAA-308 / W83).